The sequence spans 245 residues: Actin-like protein 10 (245 aa).

Belongs to the actin family.

This Homo sapiens (Human) protein is Actin-like protein 10 (ACTL10).